Consider the following 384-residue polypeptide: S-adenosylmethionine synthase (384 aa).

His-15 contributes to the ATP binding site. Asp-17 contacts Mg(2+). Residue Glu-43 participates in K(+) binding. 2 residues coordinate L-methionine: Glu-56 and Gln-99. A flexible loop region spans residues 99 to 109 (QSADINQGVDR). ATP is bound by residues 164–166 (DAK), 230–231 (RF), Asp-239, 245–246 (RK), Ala-262, and Lys-266. An L-methionine-binding site is contributed by Asp-239. Residue Lys-270 participates in L-methionine binding.

The protein belongs to the AdoMet synthase family. As to quaternary structure, homotetramer; dimer of dimers. Requires Mg(2+) as cofactor. K(+) serves as cofactor.

It is found in the cytoplasm. It carries out the reaction L-methionine + ATP + H2O = S-adenosyl-L-methionine + phosphate + diphosphate. The protein operates within amino-acid biosynthesis; S-adenosyl-L-methionine biosynthesis; S-adenosyl-L-methionine from L-methionine: step 1/1. Its function is as follows. Catalyzes the formation of S-adenosylmethionine (AdoMet) from methionine and ATP. The overall synthetic reaction is composed of two sequential steps, AdoMet formation and the subsequent tripolyphosphate hydrolysis which occurs prior to release of AdoMet from the enzyme. This Haemophilus influenzae (strain PittGG) protein is S-adenosylmethionine synthase.